The following is a 483-amino-acid chain: Scarecrow-like protein 26 (483 aa).

The region spanning 95–477 (KTDESKGLRL…RRLVSASFWA (383 aa)) is the GRAS domain. The leucine repeat I (LRI) stretch occupies residues 102 to 165 (LRLVHLLVAA…SKLLERDSVL (64 aa)). The interval 184 to 251 (FELLQNMSPY…PSAQHLRITA (68 aa)) is VHIID. The VHIID signature appears at 215–219 (IHIVD). The segment at 267 to 299 (ETGRRLTAFADSIGQPFSYQHCKLDTNAFSTSS) is leucine repeat II (LRII). The segment at 308 to 400 (VVINCMLHLP…RVFIGPWVAN (93 aa)) is PFYRE. The SAW stretch occupies residues 403 to 477 (TRITANDAEV…RRLVSASFWA (75 aa)).

This sequence belongs to the GRAS family. As to expression, expressed in seedlings, roots, leaves and flowers.

The protein localises to the nucleus. Its function is as follows. Probable transcription factor involved in plant development. This chain is Scarecrow-like protein 26 (SCL26), found in Arabidopsis thaliana (Mouse-ear cress).